A 181-amino-acid chain; its full sequence is MAANENRLVWLDMEMTGLDPEKERIIEVAVVVTEADLTVVAEGPVLVVHQPDSLLDAMDNWNKSTHGKSGLIEKVKASTLGEAQAEQILLEFLAEHVPAGKSPLCGNTISQDRRFMYAYMPNLERFFHYRNLDVSTLKELARRWAPAVYKGFDKKSRHEALADIYESIDELKYYREHLLKV.

Residues 8-171 (LVWLDMEMTG…ADIYESIDEL (164 aa)) enclose the Exonuclease domain. The active site involves tyrosine 129.

It belongs to the oligoribonuclease family.

It localises to the cytoplasm. Functionally, 3'-to-5' exoribonuclease specific for small oligoribonucleotides. The sequence is that of Oligoribonuclease from Bordetella bronchiseptica (strain ATCC BAA-588 / NCTC 13252 / RB50) (Alcaligenes bronchisepticus).